The following is a 313-amino-acid chain: tRNA dimethylallyltransferase (313 aa).

13 to 20 (GPTASGKT) contributes to the ATP binding site. 15-20 (TASGKT) is a substrate binding site. Interaction with substrate tRNA regions lie at residues 38-41 (DSAL), 162-166 (QRLSR), 243-248 (RCVGYR), and 276-283 (KRQITWLR).

The protein belongs to the IPP transferase family. In terms of assembly, monomer. It depends on Mg(2+) as a cofactor.

The enzyme catalyses adenosine(37) in tRNA + dimethylallyl diphosphate = N(6)-dimethylallyladenosine(37) in tRNA + diphosphate. Functionally, catalyzes the transfer of a dimethylallyl group onto the adenine at position 37 in tRNAs that read codons beginning with uridine, leading to the formation of N6-(dimethylallyl)adenosine (i(6)A). This chain is tRNA dimethylallyltransferase, found in Aliivibrio salmonicida (strain LFI1238) (Vibrio salmonicida (strain LFI1238)).